We begin with the raw amino-acid sequence, 497 residues long: Serine carboxypeptidase-like 20 (497 aa).

The signal sequence occupies residues methionine 1 to alanine 29. 3 disulfide bridges follow: cysteine 90–cysteine 386, cysteine 254–cysteine 266, and cysteine 289–cysteine 353. N-linked (GlcNAc...) asparagine glycosylation is found at asparagine 111 and asparagine 146. Serine 186 is an active-site residue. Asparagine 249 carries N-linked (GlcNAc...) asparagine glycosylation. N-linked (GlcNAc...) asparagine glycosylation occurs at asparagine 405. Residue aspartate 421 is part of the active site. Asparagine 463 is a glycosylation site (N-linked (GlcNAc...) asparagine). Residue histidine 474 is part of the active site. The Microbody targeting signal signature appears at serine 495–isoleucine 497.

This sequence belongs to the peptidase S10 family. Ubiquitous.

Its subcellular location is the secreted. Functionally, probable carboxypeptidase. The polypeptide is Serine carboxypeptidase-like 20 (SCPL20) (Arabidopsis thaliana (Mouse-ear cress)).